A 391-amino-acid polypeptide reads, in one-letter code: Argininosuccinate synthase (391 aa).

6–14 (AYSGGLDTT) is an ATP binding site. Tyr-84 is an L-citrulline binding site. Residue Gly-114 coordinates ATP. The L-aspartate site is built by Thr-116, Asn-120, and Asp-121. Asn-120 provides a ligand contact to L-citrulline. L-citrulline-binding residues include Arg-124, Ser-171, Ser-180, Glu-253, and Tyr-265.

It belongs to the argininosuccinate synthase family. Type 1 subfamily. As to quaternary structure, homotetramer.

The protein resides in the cytoplasm. The enzyme catalyses L-citrulline + L-aspartate + ATP = 2-(N(omega)-L-arginino)succinate + AMP + diphosphate + H(+). The protein operates within amino-acid biosynthesis; L-arginine biosynthesis; L-arginine from L-ornithine and carbamoyl phosphate: step 2/3. The chain is Argininosuccinate synthase from Metallosphaera sedula (strain ATCC 51363 / DSM 5348 / JCM 9185 / NBRC 15509 / TH2).